The sequence spans 166 residues: Transcription factor HES-5 (166 aa).

Residues 16–72 (KNRLRKPVVEKMRRDRINSSIEQLKLLLEQEFARHQPNSKLEKADILEMAVSYLKHS) enclose the bHLH domain. The region spanning 88–119 (YSEGYSWCLQEAVQFLTLHAASDTQMKLLYHF) is the Orange domain. Positions 125-166 (PAAPVKETPTPGAAPQPARSSTKAAASVSTSRQSACGLWRPW) are disordered. The span at 142-156 (ARSSTKAAASVSTSR) shows a compositional bias: low complexity. Residues 163 to 166 (WRPW) carry the WRPW motif motif.

In terms of assembly, transcription repression requires formation of a complex with a corepressor protein of the Groucho/TLE family. Expressed predominantly in embryonic neural lineage cells.

The protein localises to the nucleus. Transcriptional repressor of genes that require a bHLH protein for their transcription. Plays an important role as neurogenesis negative regulator. This is Transcription factor HES-5 (Hes5) from Rattus norvegicus (Rat).